A 322-amino-acid chain; its full sequence is Daunorubicin resistance ATP-binding protein DrrA2 (322 aa).

In terms of domain architecture, ABC transporter spans 6 to 236; it reads VRAEAMEKRY…VGGDRIEVVV (231 aa). Residue 38–45 coordinates ATP; the sequence is GPNGAGKT.

Belongs to the ABC transporter superfamily. Drug exporter-1 (DrugE1) (TC 3.A.1.105) family. As to quaternary structure, the complex is probably composed of two ATP-binding proteins (DrrA2) and two transmembrane proteins (DrrB2).

The protein localises to the cell membrane. The catalysed reaction is daunorubicin(in) + ATP + H2O = daunorubicin(out) + ADP + phosphate + H(+). In terms of biological role, part of the ABC transporter complex DrrA2B2 involved in daunorubicin efflux. Responsible for energy coupling to the transport system. Confers self-resistance to daunorubicin, an antibiotic produced by S.coeruleorubidus. The protein is Daunorubicin resistance ATP-binding protein DrrA2 of Streptomyces coeruleorubidus.